Consider the following 377-residue polypeptide: Cytochrome c peroxidase, mitochondrial (377 aa).

A mitochondrion-targeting transit peptide spans 1–17 (MSFRAPNLIRSAAGRRA). The Proton acceptor role is filled by H138. Position 261 (H261) interacts with heme b. The active-site Tryptophan radical intermediate is the W277.

The protein belongs to the peroxidase family. Cytochrome c peroxidase subfamily. As to quaternary structure, forms a one-to-one complex with cytochrome c. Requires heme b as cofactor.

The protein resides in the mitochondrion matrix. The protein localises to the mitochondrion intermembrane space. It carries out the reaction 2 Fe(II)-[cytochrome c] + H2O2 + 2 H(+) = 2 Fe(III)-[cytochrome c] + 2 H2O. Destroys radicals which are normally produced within the cells and which are toxic to biological systems. The sequence is that of Cytochrome c peroxidase, mitochondrial (CCP1) from Cryptococcus neoformans var. neoformans serotype D (strain JEC21 / ATCC MYA-565) (Filobasidiella neoformans).